The chain runs to 470 residues: Argininosuccinate lyase (470 aa).

It belongs to the lyase 1 family. Argininosuccinate lyase subfamily.

It localises to the cytoplasm. It carries out the reaction 2-(N(omega)-L-arginino)succinate = fumarate + L-arginine. The protein operates within amino-acid biosynthesis; L-arginine biosynthesis; L-arginine from L-ornithine and carbamoyl phosphate: step 3/3. This is Argininosuccinate lyase from Mycolicibacterium vanbaalenii (strain DSM 7251 / JCM 13017 / BCRC 16820 / KCTC 9966 / NRRL B-24157 / PYR-1) (Mycobacterium vanbaalenii).